The chain runs to 495 residues: Guanosine-5'-triphosphate,3'-diphosphate pyrophosphatase (495 aa).

It belongs to the GppA/Ppx family. GppA subfamily.

It catalyses the reaction guanosine 3'-diphosphate 5'-triphosphate + H2O = guanosine 3',5'-bis(diphosphate) + phosphate + H(+). It functions in the pathway purine metabolism; ppGpp biosynthesis; ppGpp from GTP: step 2/2. In terms of biological role, catalyzes the conversion of pppGpp to ppGpp. Guanosine pentaphosphate (pppGpp) is a cytoplasmic signaling molecule which together with ppGpp controls the 'stringent response', an adaptive process that allows bacteria to respond to amino acid starvation, resulting in the coordinated regulation of numerous cellular activities. The protein is Guanosine-5'-triphosphate,3'-diphosphate pyrophosphatase of Enterobacter sp. (strain 638).